The sequence spans 243 residues: Carboxy-S-adenosyl-L-methionine synthase (243 aa).

S-adenosyl-L-methionine contacts are provided by residues Tyr-40, 65–67 (GSS), 90–91 (DN), 118–119 (DI), Asn-133, and Arg-200.

Belongs to the class I-like SAM-binding methyltransferase superfamily. Cx-SAM synthase family. In terms of assembly, homodimer.

It catalyses the reaction prephenate + S-adenosyl-L-methionine = carboxy-S-adenosyl-L-methionine + 3-phenylpyruvate + H2O. Its function is as follows. Catalyzes the conversion of S-adenosyl-L-methionine (SAM) to carboxy-S-adenosyl-L-methionine (Cx-SAM). The sequence is that of Carboxy-S-adenosyl-L-methionine synthase from Shewanella frigidimarina (strain NCIMB 400).